We begin with the raw amino-acid sequence, 464 residues long: GDNF family receptor alpha-2 (464 aa).

Positions 1–21 (MILANVFCLFFFLDETLRSLA) are cleaved as a signal peptide. 14 disulfide bridges follow: cysteine 40–cysteine 93, cysteine 47–cysteine 53, cysteine 63–cysteine 78, cysteine 95–cysteine 105, cysteine 161–cysteine 222, cysteine 168–cysteine 174, cysteine 185–cysteine 200, cysteine 195–cysteine 241, cysteine 224–cysteine 229, cysteine 251–cysteine 323, cysteine 258–cysteine 264, cysteine 275–cysteine 293, cysteine 285–cysteine 347, and cysteine 325–cysteine 335. Asparagine 52 is a glycosylation site (N-linked (GlcNAc...) asparagine). N-linked (GlcNAc...) asparagine glycans are attached at residues asparagine 357 and asparagine 413. Residue serine 444 is the site of GPI-anchor amidated serine attachment. Residues 445 to 464 (RARPSAALTVLSVLMLKLAL) constitute a propeptide, removed in mature form.

It belongs to the GDNFR family. Interacts with NRTN ligand and RET: forms a 2:2:2 ternary complex composed of NRTN ligand, GFRA2 and RET receptor. Also forms a 4:4:4 tetrameric complex composed of 4 copies of NRTN ligand, GFRA2 and RET receptor, which prevents endocytosis of RET. Interacts with SORL1.

The protein resides in the cell membrane. Functionally, receptor for neurturin (NRTN), a growth factor that supports the survival of sympathetic neurons. NRTN-binding leads to autophosphorylation and activation of the RET receptor. Also able to mediate GDNF signaling through the RET tyrosine kinase receptor. This Pongo abelii (Sumatran orangutan) protein is GDNF family receptor alpha-2 (GFRA2).